A 104-amino-acid polypeptide reads, in one-letter code: UPF0147 protein MK1586 (104 aa).

The protein belongs to the UPF0147 family.

This is UPF0147 protein MK1586 from Methanopyrus kandleri (strain AV19 / DSM 6324 / JCM 9639 / NBRC 100938).